Reading from the N-terminus, the 590-residue chain is Aspartate--tRNA(Asp/Asn) ligase (590 aa).

Glu173 serves as a coordination point for L-aspartate. The aspartate stretch occupies residues 197 to 200 (QIFK). An L-aspartate-binding site is contributed by Arg219. ATP is bound by residues 219–221 (RDE) and Gln228. His450 provides a ligand contact to L-aspartate. ATP is bound at residue Glu484. Position 491 (Arg491) interacts with L-aspartate. 536–539 (GLDR) lines the ATP pocket.

Belongs to the class-II aminoacyl-tRNA synthetase family. Type 1 subfamily. As to quaternary structure, homodimer.

It localises to the cytoplasm. The enzyme catalyses tRNA(Asx) + L-aspartate + ATP = L-aspartyl-tRNA(Asx) + AMP + diphosphate. Its function is as follows. Aspartyl-tRNA synthetase with relaxed tRNA specificity since it is able to aspartylate not only its cognate tRNA(Asp) but also tRNA(Asn). Reaction proceeds in two steps: L-aspartate is first activated by ATP to form Asp-AMP and then transferred to the acceptor end of tRNA(Asp/Asn). This is Aspartate--tRNA(Asp/Asn) ligase from Coxiella burnetii (strain Dugway 5J108-111).